The chain runs to 382 residues: 1-deoxy-D-xylulose 5-phosphate reductoisomerase (382 aa).

The NADPH site is built by threonine 10, glycine 11, serine 12, isoleucine 13, asparagine 38, and asparagine 120. 1-deoxy-D-xylulose 5-phosphate is bound at residue lysine 121. Glutamate 122 contacts NADPH. Mn(2+) is bound at residue aspartate 146. 1-deoxy-D-xylulose 5-phosphate-binding residues include serine 147, glutamate 148, serine 172, and histidine 195. Mn(2+) is bound at residue glutamate 148. Glycine 201 contacts NADPH. Serine 208, asparagine 213, lysine 214, and glutamate 217 together coordinate 1-deoxy-D-xylulose 5-phosphate. Mn(2+) is bound at residue glutamate 217.

It belongs to the DXR family. Mg(2+) serves as cofactor. It depends on Mn(2+) as a cofactor.

It catalyses the reaction 2-C-methyl-D-erythritol 4-phosphate + NADP(+) = 1-deoxy-D-xylulose 5-phosphate + NADPH + H(+). The protein operates within isoprenoid biosynthesis; isopentenyl diphosphate biosynthesis via DXP pathway; isopentenyl diphosphate from 1-deoxy-D-xylulose 5-phosphate: step 1/6. Catalyzes the NADPH-dependent rearrangement and reduction of 1-deoxy-D-xylulose-5-phosphate (DXP) to 2-C-methyl-D-erythritol 4-phosphate (MEP). This Thermoanaerobacter pseudethanolicus (strain ATCC 33223 / 39E) (Clostridium thermohydrosulfuricum) protein is 1-deoxy-D-xylulose 5-phosphate reductoisomerase.